The primary structure comprises 580 residues: Putative adenine deaminase YerA (580 aa).

A Phosphoserine modification is found at serine 399.

It belongs to the metallo-dependent hydrolases superfamily. Adenine deaminase family.

It catalyses the reaction adenine + H2O + H(+) = hypoxanthine + NH4(+). The protein is Putative adenine deaminase YerA (yerA) of Bacillus subtilis (strain 168).